A 968-amino-acid chain; its full sequence is RNA polymerase-associated protein RapA (968 aa).

The Helicase ATP-binding domain maps to 163–332; that stretch reads EVGRRYAPRV…FARLRLLDPD (170 aa). ATP is bound at residue 176-183; it reads DEVGLGKT. A DEAH box motif is present at residues 278–281; the sequence is DEAH. Residues 491 to 655 enclose the Helicase C-terminal domain; it reads RVDWLIEFLK…EFAEDLLNVL (165 aa).

It belongs to the SNF2/RAD54 helicase family. RapA subfamily. Interacts with the RNAP. Has a higher affinity for the core RNAP than for the holoenzyme. Its ATPase activity is stimulated by binding to RNAP.

In terms of biological role, transcription regulator that activates transcription by stimulating RNA polymerase (RNAP) recycling in case of stress conditions such as supercoiled DNA or high salt concentrations. Probably acts by releasing the RNAP, when it is trapped or immobilized on tightly supercoiled DNA. Does not activate transcription on linear DNA. Probably not involved in DNA repair. This Shewanella baltica (strain OS223) protein is RNA polymerase-associated protein RapA.